The primary structure comprises 109 residues: Nucleoid-associated protein plu3840 (109 aa).

2 disordered regions span residues 1-23 (MFGKGGLGNLMKQAQQMQDKMQK) and 89-109 (KEKMAGISSGMQLPPGFKMPF).

Belongs to the YbaB/EbfC family. Homodimer.

It localises to the cytoplasm. It is found in the nucleoid. Functionally, binds to DNA and alters its conformation. May be involved in regulation of gene expression, nucleoid organization and DNA protection. This chain is Nucleoid-associated protein plu3840, found in Photorhabdus laumondii subsp. laumondii (strain DSM 15139 / CIP 105565 / TT01) (Photorhabdus luminescens subsp. laumondii).